The following is a 195-amino-acid chain: Obelin (195 aa).

The propeptide occupies 1–6; that stretch reads MSSKYA. EF-hand domains are found at residues 17 to 52, 53 to 88, 110 to 145, and 146 to 181; these read RWIK…DICA, KLEA…FPQF, LIRE…SGIS, and PSQE…FWYT. Ca(2+) is bound by residues Asp30, Asn32, Asn34, Lys36, and Glu41. Ca(2+) contacts are provided by Asp123, Asp125, Ser127, Thr129, Glu134, Asp159, Asp161, Ser163, Asp165, and Glu170.

The protein belongs to the aequorin family.

Functionally, ca(2+)-dependent bioluminescence photoprotein. Displays an emission peak at 470 nm (blue light). Trace amounts of calcium ion trigger the intramolecular oxidation of the chromophore, coelenterazine into coelenteramide and CO(2) with the concomitant emission of light. In Obelia longissima (Black sea hydrozoan), this protein is Obelin.